The sequence spans 114 residues: DNA-binding protein rrnAC3180 (114 aa).

Over residues 1–11 (MSGDPSEEELE) the composition is skewed to acidic residues. Positions 1–45 (MSGDPSEEELEELRKKKMEQLKEQQGGEGEGQEAAQQQAEAQKQA) are disordered. The segment covering 12-22 (ELRKKKMEQLK) has biased composition (basic and acidic residues). The segment covering 32–45 (QEAAQQQAEAQKQA) has biased composition (low complexity).

It belongs to the PDCD5 family.

The chain is DNA-binding protein rrnAC3180 from Haloarcula marismortui (strain ATCC 43049 / DSM 3752 / JCM 8966 / VKM B-1809) (Halobacterium marismortui).